We begin with the raw amino-acid sequence, 224 residues long: Cytidylate kinase (224 aa).

Position 11 to 19 (11 to 19 (GPAAAGKST)) interacts with ATP.

This sequence belongs to the cytidylate kinase family. Type 1 subfamily.

It is found in the cytoplasm. The catalysed reaction is CMP + ATP = CDP + ADP. The enzyme catalyses dCMP + ATP = dCDP + ADP. This chain is Cytidylate kinase, found in Listeria monocytogenes serotype 4b (strain CLIP80459).